Consider the following 235-residue polypeptide: Orotidine 5'-phosphate decarboxylase (235 aa).

Substrate contacts are provided by residues aspartate 12, lysine 34, 61-70 (DMKLLDIDNT), threonine 116, arginine 177, glutamine 186, and arginine 207. Lysine 63 serves as the catalytic Proton donor.

Belongs to the OMP decarboxylase family. Type 1 subfamily. Homodimer.

It catalyses the reaction orotidine 5'-phosphate + H(+) = UMP + CO2. Its pathway is pyrimidine metabolism; UMP biosynthesis via de novo pathway; UMP from orotate: step 2/2. Functionally, catalyzes the decarboxylation of orotidine 5'-monophosphate (OMP) to uridine 5'-monophosphate (UMP). This Agrobacterium fabrum (strain C58 / ATCC 33970) (Agrobacterium tumefaciens (strain C58)) protein is Orotidine 5'-phosphate decarboxylase.